The following is a 556-amino-acid chain: PPE family protein PPE2 (556 aa).

The interval alanine 8–alanine 164 is PPE. The tract at residues glutamine 201–leucine 256 is SH3-like. The tract at residues leucine 319–leucine 340 is leucine zipper motif. 2 disordered regions span residues threonine 385–threonine 418 and glycine 443–glutamate 556. Residues proline 400–valine 417 are compositionally biased toward pro residues. Residues alanine 456 to proline 471 are compositionally biased toward low complexity. The span at glutamine 472–glutamine 481 shows a compositional bias: basic residues. The Nuclear localization signal motif lies at arginine 473–glutamine 481.

This sequence belongs to the mycobacterial PPE family.

The protein localises to the secreted. It is found in the host cytoplasm. It localises to the host nucleus. Its function is as follows. Inhibits nitric oxide (NO) production in activated macrophages. Acts by inhibiting expression of the host inducible nitric oxide synthase (iNOS). PPE2 is translocated into the host macrophage nucleus, where it interacts with a GATA-binding site overlapping with the TATA box of NOS2 (iNOS) promoter, and strongly inhibits NOS2 gene transcription. Reduction in NO production in turn facilitates intracellular survival of the bacilli inside the macrophage. In addition, disrupts the assembly of NADPH oxidase complex, which inhibits NADPH oxidase-mediated reactive oxygen species (ROS) generation in macrophages and favors M.tuberculosis survival. Acts by interacting with NCF2, the cytosolic subunit of NADPH oxidase, and preventing translocation of NCF2 and NCF1 to the membrane, which causes a reduction of the functional assembly of NADPH oxidase complex and a decrease in NADPH oxidase activity. The polypeptide is PPE family protein PPE2 (PPE2) (Mycobacterium tuberculosis (strain ATCC 25618 / H37Rv)).